Reading from the N-terminus, the 528-residue chain is Tyrosine--tRNA ligase, cytoplasmic (528 aa).

The residue at position 1 (methionine 1) is an N-acetylmethionine. Glycine 2 carries the N-acetylglycine; in Tyrosine--tRNA ligase, cytoplasmic, N-terminally processed modification. An L-tyrosine-binding site is contributed by tyrosine 39. Tyrosine 39 is a trans-resveratrol binding site. The 'HIGH' region signature appears at 44–52; that stretch reads TTGKPHVAY. The L-tyrosine site is built by tyrosine 166, glutamine 170, aspartate 173, and glutamine 188. Residues glutamine 170 and aspartate 173 each contribute to the trans-resveratrol site. N6-acetyllysine is present on lysine 197. Residue serine 205 is modified to Phosphoserine. N6-acetyllysine is present on lysine 206. A 'KMSKS' region motif is present at residues 222-226; sequence KMSSS. A Nuclear localization signal motif is present at residues 242-247; it reads KKKLKK. The interval 339 to 363 is disordered; the sequence is AAYPDPSKQKPMAKGPAKNSEPEEV. The tRNA-binding domain maps to 364 to 468; the sequence is IPSRLDIRVG…AGSAPGEHVF (105 aa). A Phosphoserine modification is found at serine 386. 3 positions are modified to N6-acetyllysine: lysine 474, lysine 482, and lysine 490.

The protein belongs to the class-I aminoacyl-tRNA synthetase family. As to quaternary structure, homodimer. Interacts (when binding to resveratrol) with PARP1; interaction stimulates the poly-ADP-ribosyltransferase activity of PARP1.

The protein resides in the cytoplasm. It localises to the nucleus. It carries out the reaction tRNA(Tyr) + L-tyrosine + ATP = L-tyrosyl-tRNA(Tyr) + AMP + diphosphate + H(+). With respect to regulation, resveratrol strongly inhibits the tyrosine--tRNA ligase activity. Tyrosine--tRNA ligase that catalyzes the attachment of tyrosine to tRNA(Tyr) in a two-step reaction: tyrosine is first activated by ATP to form Tyr-AMP and then transferred to the acceptor end of tRNA(Tyr). Also acts as a positive regulator of poly-ADP-ribosylation in the nucleus, independently of its tyrosine--tRNA ligase activity. Activity is switched upon resveratrol-binding: resveratrol strongly inhibits the tyrosine--tRNA ligase activity and promotes relocalization to the nucleus, where YARS1 specifically stimulates the poly-ADP-ribosyltransferase activity of PARP1. This Homo sapiens (Human) protein is Tyrosine--tRNA ligase, cytoplasmic.